We begin with the raw amino-acid sequence, 381 residues long: Succinyl-diaminopimelate desuccinylase (381 aa).

H76 provides a ligand contact to Zn(2+). The active site involves D78. D107 serves as a coordination point for Zn(2+). Catalysis depends on E140, which acts as the Proton acceptor. Zn(2+) is bound by residues E141, E169, and H354.

This sequence belongs to the peptidase M20A family. DapE subfamily. In terms of assembly, homodimer. Zn(2+) is required as a cofactor. The cofactor is Co(2+).

It carries out the reaction N-succinyl-(2S,6S)-2,6-diaminopimelate + H2O = (2S,6S)-2,6-diaminopimelate + succinate. The protein operates within amino-acid biosynthesis; L-lysine biosynthesis via DAP pathway; LL-2,6-diaminopimelate from (S)-tetrahydrodipicolinate (succinylase route): step 3/3. Its function is as follows. Catalyzes the hydrolysis of N-succinyl-L,L-diaminopimelic acid (SDAP), forming succinate and LL-2,6-diaminopimelate (DAP), an intermediate involved in the bacterial biosynthesis of lysine and meso-diaminopimelic acid, an essential component of bacterial cell walls. This Gluconobacter oxydans (strain 621H) (Gluconobacter suboxydans) protein is Succinyl-diaminopimelate desuccinylase.